The sequence spans 903 residues: Probable dipeptidyl-aminopeptidase B (903 aa).

The tract at residues 1-83 (MGKFEDDGNS…PLISSGTKTG (83 aa)) is disordered. The Cytoplasmic segment spans residues 1–90 (MGKFEDDGNS…KTGSSSRLRK (90 aa)). A compositionally biased stretch (polar residues) spans 10 to 37 (SESVPLTRQRSESLASQTSTDSGLSIAS). Residues 91–111 (IVWLLVLLCVGGWVLSFVLFL) traverse the membrane as a helical; Signal-anchor for type II membrane protein segment. The Vacuolar segment spans residues 112–903 (TQKRPDTAAL…TANPKPQEST (792 aa)). The disordered stretch occupies residues 121–143 (LSSASTVEIHEPGPATGGTSHGK). Asn-268, Asn-349, and Asn-640 each carry an N-linked (GlcNAc...) asparagine glycan. Residue Ser-754 is the Charge relay system of the active site. Asn-808 carries N-linked (GlcNAc...) asparagine glycosylation. Active-site charge relay system residues include Asp-831 and His-864.

This sequence belongs to the peptidase S9B family.

It is found in the vacuole membrane. The catalysed reaction is Release of an N-terminal dipeptide, Xaa-Yaa-|-Zaa-, from a polypeptide, preferentially when Yaa is Pro, provided Zaa is neither Pro nor hydroxyproline.. In terms of biological role, type IV dipeptidyl-peptidase which removes N-terminal dipeptides sequentially from polypeptides having unsubstituted N-termini provided that the penultimate residue is proline. The sequence is that of Probable dipeptidyl-aminopeptidase B (dapB) from Penicillium rubens (strain ATCC 28089 / DSM 1075 / NRRL 1951 / Wisconsin 54-1255) (Penicillium chrysogenum).